Consider the following 396-residue polypeptide: Phosphoglycerate kinase (396 aa).

Substrate contacts are provided by residues Asp21 to Asn23, Arg36, His59 to Arg62, Arg118, and Arg151. ATP-binding positions include Lys201, Glu323, and Gly353 to Thr356.

It belongs to the phosphoglycerate kinase family. In terms of assembly, monomer.

The protein localises to the cytoplasm. It carries out the reaction (2R)-3-phosphoglycerate + ATP = (2R)-3-phospho-glyceroyl phosphate + ADP. It participates in carbohydrate degradation; glycolysis; pyruvate from D-glyceraldehyde 3-phosphate: step 2/5. This Rhodospirillum centenum (strain ATCC 51521 / SW) protein is Phosphoglycerate kinase.